Here is a 424-residue protein sequence, read N- to C-terminus: L-glutamine:2-deoxy-scyllo-inosose aminotransferase (424 aa).

Lysine 202 is subject to N6-(pyridoxal phosphate)lysine.

It belongs to the DegT/DnrJ/EryC1 family. L-glutamine:2-deoxy-scyllo-inosose/scyllo-inosose aminotransferase subfamily. Pyridoxal 5'-phosphate is required as a cofactor.

It carries out the reaction 2-deoxy-L-scyllo-inosose + L-glutamine = 2-deoxy-scyllo-inosamine + 2-oxoglutaramate. The catalysed reaction is 3-amino-2,3-dideoxy-scyllo-inosose + L-glutamine = 2-deoxystreptamine + 2-oxoglutaramate. It participates in metabolic intermediate biosynthesis; 2-deoxystreptamine biosynthesis; 2-deoxystreptamine from D-glucose 6-phosphate: step 2/4. Its pathway is metabolic intermediate biosynthesis; 2-deoxystreptamine biosynthesis; 2-deoxystreptamine from D-glucose 6-phosphate: step 4/4. The protein operates within antibiotic biosynthesis; ribostamycin biosynthesis. Catalyzes the PLP-dependent transamination of 2-deoxy-scyllo-inosose (2-DOI) to form 2-deoxy-scyllo-inosamine (2-DOIA) using L-glutamine as the amino donor. Also catalyzes the transamination of 3-amino-2,3-dideoxy-scyllo-inosose (keto-2-DOIA) into 2-deoxystreptamine (2-DOS). The protein is L-glutamine:2-deoxy-scyllo-inosose aminotransferase (rbmB) of Streptomyces ribosidificus.